We begin with the raw amino-acid sequence, 153 residues long: Transcriptional repressor NrdR (153 aa).

A zinc finger spans residues 3–34 (CPFCAHDDSQVKDSRPAEDNAAIRRRRQCSKC). In terms of domain architecture, ATP-cone spans 49–139 (VTVVKSDDKR…VYRDFSEARD (91 aa)).

The protein belongs to the NrdR family. The cofactor is Zn(2+).

Its function is as follows. Negatively regulates transcription of bacterial ribonucleotide reductase nrd genes and operons by binding to NrdR-boxes. This Erythrobacter litoralis (strain HTCC2594) protein is Transcriptional repressor NrdR.